The following is an 89-amino-acid chain: Small ribosomal subunit protein uS15 (89 aa).

The protein belongs to the universal ribosomal protein uS15 family. In terms of assembly, part of the 30S ribosomal subunit. Forms a bridge to the 50S subunit in the 70S ribosome, contacting the 23S rRNA.

Functionally, one of the primary rRNA binding proteins, it binds directly to 16S rRNA where it helps nucleate assembly of the platform of the 30S subunit by binding and bridging several RNA helices of the 16S rRNA. In terms of biological role, forms an intersubunit bridge (bridge B4) with the 23S rRNA of the 50S subunit in the ribosome. In Pseudomonas putida (Arthrobacter siderocapsulatus), this protein is Small ribosomal subunit protein uS15.